We begin with the raw amino-acid sequence, 574 residues long: Amino-acid acetyltransferase, mitochondrial (574 aa).

The transit peptide at 1 to 13 (MWRRIFAHELKYD) directs the protein to the mitochondrion. The N-acetyltransferase domain occupies 392–560 (KGAKPSSNSP…KRLREFMRSV (169 aa)).

Belongs to the acetyltransferase family. In terms of assembly, interacts with the acetylglutamate kinase chain of AGR5,6.

It localises to the mitochondrion. It catalyses the reaction L-glutamate + acetyl-CoA = N-acetyl-L-glutamate + CoA + H(+). Its pathway is amino-acid biosynthesis; L-arginine biosynthesis; N(2)-acetyl-L-ornithine from L-glutamate: step 1/4. With respect to regulation, feedback inhibition by L-arginine. N-acetylglutamate synthase involved in arginine biosynthesis. This Saccharomyces cerevisiae (strain RM11-1a) (Baker's yeast) protein is Amino-acid acetyltransferase, mitochondrial (ARG2).